The following is a 224-amino-acid chain: Putative adhesin RF_1314 (224 aa).

A signal peptide spans 1–22; sequence MKKLLLIAATSATILSSSISFA.

The polypeptide is Putative adhesin RF_1314 (Rickettsia felis (strain ATCC VR-1525 / URRWXCal2) (Rickettsia azadi)).